The following is a 226-amino-acid chain: Thiopurine S-methyltransferase (226 aa).

Trp16, Met51, Glu72, and Arg131 together coordinate S-adenosyl-L-methionine.

This sequence belongs to the class I-like SAM-binding methyltransferase superfamily. TPMT family.

It localises to the cytoplasm. The enzyme catalyses S-adenosyl-L-methionine + a thiopurine = S-adenosyl-L-homocysteine + a thiopurine S-methylether.. The polypeptide is Thiopurine S-methyltransferase (Francisella tularensis subsp. novicida (strain U112)).